A 357-amino-acid polypeptide reads, in one-letter code: 3-dehydroquinate synthase (357 aa).

Residues 126-127 (TT), K139, and K148 contribute to the NAD(+) site. 3 residues coordinate Zn(2+): E181, H244, and H261.

Belongs to the sugar phosphate cyclases superfamily. Dehydroquinate synthase family. It depends on Co(2+) as a cofactor. Zn(2+) serves as cofactor. The cofactor is NAD(+).

Its subcellular location is the cytoplasm. The enzyme catalyses 7-phospho-2-dehydro-3-deoxy-D-arabino-heptonate = 3-dehydroquinate + phosphate. The protein operates within metabolic intermediate biosynthesis; chorismate biosynthesis; chorismate from D-erythrose 4-phosphate and phosphoenolpyruvate: step 2/7. In terms of biological role, catalyzes the conversion of 3-deoxy-D-arabino-heptulosonate 7-phosphate (DAHP) to dehydroquinate (DHQ). This is 3-dehydroquinate synthase from Solibacter usitatus (strain Ellin6076).